We begin with the raw amino-acid sequence, 376 residues long: Inactive CLIP domain-containing serine protease A28 (376 aa).

A signal peptide spans 1–19; sequence MKVLLFCIVISLTTLIASG. In terms of domain architecture, Clip spans 24–80; that stretch reads EELRCPGGYCVSKYLCPNGTFIDDIKHAQTTQLIGLRAGLDIDDFDDCNDYLLVCCQ. 3 disulfide bridges follow: Cys28/Cys78, Cys33/Cys71, and Cys39/Cys79. N-linked (GlcNAc...) asparagine glycosylation occurs at Asn41. A disordered region spans residues 85–106; that stretch reads PTATSTEKPATSDELIEPPPST. Residues 114–364 enclose the Peptidase S1 domain; that stretch reads NEGGLIYDLR…YVQWLNEHIV (251 aa). Residues Asn125 and Asn279 are each glycosylated (N-linked (GlcNAc...) asparagine). Cystine bridges form between Cys251-Cys321, Cys280-Cys301, and Cys311-Cys340. N-linked (GlcNAc...) asparagine glycosylation is present at Asn369.

The protein belongs to the peptidase S1 family. CLIP subfamily. In terms of assembly, may form a heterodimer of a light chain and a heavy chain; disulfide-linked. In terms of processing, secreted as a full-length protein. Proteolytically cleaved into two chains which probably remain covalently linked. Cleavage is induced by fungus B.bassiana and Gram-positive or Gram-negative bacteria infection.

The protein resides in the secreted. Its function is as follows. Inactive serine protease which plays an essential role in the innate immune response against bacteria, fungi and protozoa infection by activating the melanization cascade. In the melanization cascade, acts downstream of TEP1, SPCLIP1 and CLIPA8 to promote CLIPC9 proteolytic cleavage. In the susceptible strain G3, appears to be dispensable for parasite P.berghei ookinete elimination which occurs by lysis. Required for the melanization of Gram-positive and Gram-negative bacteria. Required for the melanization of fungus B.bassiana. In Anopheles gambiae (African malaria mosquito), this protein is Inactive CLIP domain-containing serine protease A28.